The following is a 693-amino-acid chain: Iron-sulfur clusters transporter atm1, mitochondrial (693 aa).

The N-terminal 28 residues, 1 to 28, are a transit peptide targeting the mitochondrion; it reads MLERCPWKLISSPRNIPARSFLNSRGTY. Over 29–118 the chain is Mitochondrial matrix; sequence LVLRKSNILP…PKGKTNLKVR (90 aa). A helical transmembrane segment spans residues 119–140; sequence VVSALALLVAAKILNVQVPFYF. The ABC transmembrane type-1 domain occupies 119-409; that stretch reads VVSALALLVA…LGSVYREMRQ (291 aa). Topologically, residues 141-163 are mitochondrial intermembrane; that stretch reads KSIIDTMNTTLVQEVGALWSTVG. Residues 164–187 traverse the membrane as a helical segment; that stretch reads AVVLGYGFARIFSTVFQELRNSVF. Over 188–236 the chain is Mitochondrial matrix; that stretch reads AIVSQSAIRSVSSNVYQHLLNLDMNFHLSKQTGSITRAMDRGTKGISFI. Residues 237–260 form a helical membrane-spanning segment; the sequence is LSSMVLHIIPITLEIAMVSGILTY. Position 261 (K261) is a topological domain, mitochondrial intermembrane. Residues 262–282 form a helical membrane-spanning segment; the sequence is YGPSFSAIAATTVALYALFTV. The Mitochondrial matrix segment spans residues 283–348; sequence RTTSWRTVFR…ANVKVASSLA (66 aa). Glutathione-binding positions include 288-292 and 351-354; these read RTVFR and NSGQ. Residues 349 to 367 form a helical membrane-spanning segment; that stretch reads FLNSGQAIIFSTALTLMMY. The Mitochondrial intermembrane segment spans residues 368-382; the sequence is MGCRGIVTSNLTVGD. Residues 383 to 404 form a helical membrane-spanning segment; sequence LVMINQLVFQLSIPLNFLGSVY. Residue G401 coordinates glutathione. The Mitochondrial matrix portion of the chain corresponds to 405–693; sequence REMRQAFTDM…FGESNKSGDA (289 aa). The ABC transporter domain maps to 443 to 679; that stretch reads IQFDNVHFSY…NSVYTSMWHS (237 aa). ATP is bound by residues Y452 and 476 to 487; that span reads GASGCGKSTILR.

Belongs to the ABC transporter superfamily. ABCB family. Heavy Metal importer (TC 3.A.1.210) subfamily. As to quaternary structure, homodimer.

The protein resides in the mitochondrion inner membrane. In terms of biological role, performs an essential function in the generation of cytoplasmic iron-sulfur proteins by mediating the ATP-dependent export of Fe/S cluster precursors synthesized by nfs1 and other mitochondrial proteins. Hydrolyzes ATP. Binds glutathione and may function by transporting a glutathione-conjugated iron-sulfur compound. This chain is Iron-sulfur clusters transporter atm1, mitochondrial, found in Schizosaccharomyces pombe (strain 972 / ATCC 24843) (Fission yeast).